We begin with the raw amino-acid sequence, 288 residues long: ATP synthase gamma chain (288 aa).

It belongs to the ATPase gamma chain family. F-type ATPases have 2 components, CF(1) - the catalytic core - and CF(0) - the membrane proton channel. CF(1) has five subunits: alpha(3), beta(3), gamma(1), delta(1), epsilon(1). CF(0) has three main subunits: a, b and c.

It is found in the cell inner membrane. In terms of biological role, produces ATP from ADP in the presence of a proton gradient across the membrane. The gamma chain is believed to be important in regulating ATPase activity and the flow of protons through the CF(0) complex. This is ATP synthase gamma chain from Stutzerimonas stutzeri (strain A1501) (Pseudomonas stutzeri).